The chain runs to 421 residues: uncharacterized protein (421 aa).

This is an uncharacterized protein from Escherichia coli (strain K12).